Consider the following 466-residue polypeptide: Adenosylhomocysteinase (466 aa).

Substrate-binding residues include Thr57, Asp132, and Glu192. Position 193–195 (193–195 (TTT)) interacts with NAD(+). Substrate contacts are provided by Lys222 and Asp226. Residues Asn227, 256-261 (GYGDVG), Glu279, Asn314, 335-337 (IGH), and Asn380 each bind NAD(+).

Belongs to the adenosylhomocysteinase family. NAD(+) serves as cofactor.

The protein localises to the cytoplasm. It catalyses the reaction S-adenosyl-L-homocysteine + H2O = L-homocysteine + adenosine. The protein operates within amino-acid biosynthesis; L-homocysteine biosynthesis; L-homocysteine from S-adenosyl-L-homocysteine: step 1/1. Functionally, may play a key role in the regulation of the intracellular concentration of adenosylhomocysteine. This chain is Adenosylhomocysteinase, found in Rhizobium meliloti (strain 1021) (Ensifer meliloti).